The following is a 664-amino-acid chain: MKRVTITIDGEQTKGIVIGTIAANHTAAEWLLTASVSAKSAKVRFDPEEAVAETSSLVMIAPTRTEKYLYLVPDEQVQPVTTIVRKYGLLSPLDWDCPDYPAGDAFEHLFLQNKLWNDLVTIEREHRAKYRELIGSDEETAQMDTEIASIKDRLSVLDEGRKKLRVEHRKKKCPEIDCLDENIKKLKSELKAVASKAKETRAAAKDRIRAAGNDIENLEKDRQAAVIKAYNNSGLWWGNYNAVLESYKKARIKALKDGAELKYHRFDGSGRFTNQIQGGMSVQDLLEGNRNVASLRLVSSGELGDISGKKPPSLDLQSVGSRRDSREYGILAITLYTGTDEQSKKFRRTLSFPVILHRPLPEGATLKSLSVHRKRVGTDFVWSVVFTFTTDCPTYDQRSSTGNRCGLNLGWKKQAGGGLRVATIYDGSDARHITLPQAIIDGLDYVNGDLQGRIDSAANENHAWLLEQWGGDELPESLQELRSMLRRSKRPHPAKFAKAVIAWRNYPEYLGDARDEAEQRRKATKRLTIEMAHKREKLLRRRMDFYRNTAKQLTSVYDVICLDKMDLRRLALLEKGDGTPNELTKIARKQRQQAAISELRECLSKAAAKNGTQIEQVSTASSATCSACKGKMEQVDGIMWRCRECRALVDQDINAAANLFREVL.

The tract at residues 1–137 (MKRVTITIDG…AKYRELIGSD (137 aa)) is recognition domain (REC1-N). Residues 138–212 (EETAQMDTEI…AAKDRIRAAG (75 aa)) form a recognition domain (REC2) region. The tract at residues 213-270 (NDIENLEKDRQAAVIKAYNNSGLWWGNYNAVLESYKKARIKALKDGAELKYHRFDGSG) is recognition domain (REC1-C). The tract at residues 271-390 (RFTNQIQGGM…VWSVVFTFTT (120 aa)) is wedge domain (WED). Residues 391 to 404 (DCPTYDQRSSTGNR) form a linker region. Residues 405–618 (CGLNLGWKKQ…KNGTQIEQVS (214 aa)) form a ruvC-I region. The segment at 618–650 (STASSATCSACKGKMEQVDGIMWRCRECRALVD) is target nucleic-acid binding (TNB). 4 residues coordinate Zn(2+): Cys-625, Cys-628, Cys-642, and Cys-645. The segment at 651-664 (QDINAAANLFREVL) is ruvC-II. Asp-652 is a Mg(2+) binding site.

The protein belongs to the CRISPR-associated DNA-binding protein Cas12m family. Mg(2+) is required as a cofactor. Zn(2+) serves as cofactor.

Its function is as follows. CRISPR (clustered regularly interspaced short palindromic repeat), is an adaptive immune system that provides protection against mobile genetic elements (viruses, transposable elements and conjugative plasmids). CRISPR clusters contain sequences complementary to antecedent mobile elements and target invading nucleic acids. CRISPR clusters are transcribed and processed into CRISPR RNA (crRNA). Recognizes a short motif in the CRISPR repeat sequences (the 5' PAM or protospacer adjacent motif, 5'-CCN-3' in this organism) to help distinguish self versus nonself, as targets within the bacterial CRISPR locus do not have PAMs. Cas12m-crRNA binds DNA in a PAM-dependent, crRNA-guided fashion. DNA-binding probably inhibits transcription, leading to gene silencing. Upon expression in E.coli as a CRISPR region preferentially binds to its associated crRNA. Probably required for pre-crRNA processing to mature crRNA. The sequence is that of CRISPR-associated DNA-binding protein Cas12m from Pelobacter propionicus (strain DSM 2379 / NBRC 103807 / OttBd1).